A 340-amino-acid polypeptide reads, in one-letter code: 4-amino-5-hydroxymethyl-2-methylpyrimidine phosphate synthase THI12 (340 aa).

Lys-62 carries the post-translational modification N6-(pyridoxal phosphate)lysine. His-66 is an active-site residue. Gly-115 to Gly-118 is a binding site for pyridoxal 5'-phosphate. Residues Cys-195 to Cys-199 carry the CCCFC; essential for catalytic activity, may be the site of iron coordination motif.

It belongs to the NMT1/THI5 family. As to quaternary structure, homodimer. It depends on Fe cation as a cofactor.

The catalysed reaction is N(6)-(pyridoxal phosphate)-L-lysyl-[4-amino-5-hydroxymethyl-2-methylpyrimidine phosphate synthase] + L-histidyl-[4-amino-5-hydroxymethyl-2-methylpyrimidine phosphate synthase] + 2 Fe(3+) + 4 H2O = L-lysyl-[4-amino-5-hydroxymethyl-2-methylpyrimidine phosphate synthase] + (2S)-2-amino-5-hydroxy-4-oxopentanoyl-[4-amino-5-hydroxymethyl-2-methylpyrimidine phosphate synthase] + 4-amino-2-methyl-5-(phosphooxymethyl)pyrimidine + 3-oxopropanoate + 2 Fe(2+) + 2 H(+). It participates in cofactor biosynthesis; thiamine diphosphate biosynthesis. In terms of biological role, responsible for the formation of the pyrimidine heterocycle in the thiamine biosynthesis pathway. Catalyzes the formation of hydroxymethylpyrimidine phosphate (HMP-P) from histidine and pyridoxal phosphate (PLP). The protein uses PLP and the active site histidine to form HMP-P, generating an inactive enzyme. The enzyme can only undergo a single turnover, which suggests it is a suicide enzyme. The sequence is that of 4-amino-5-hydroxymethyl-2-methylpyrimidine phosphate synthase THI12 from Saccharomyces cerevisiae (strain ATCC 204508 / S288c) (Baker's yeast).